We begin with the raw amino-acid sequence, 430 residues long: Adenylosuccinate synthetase (430 aa).

GTP-binding positions include 12–18 and 40–42; these read GDEGKGK and GHT. Catalysis depends on Asp13, which acts as the Proton acceptor. Mg(2+)-binding residues include Asp13 and Gly40. Residues 13 to 16, 38 to 41, Thr129, Arg143, Gln223, Thr238, and Arg302 contribute to the IMP site; these read DEGK and NAGH. His41 acts as the Proton donor in catalysis. Residue 298-304 participates in substrate binding; sequence TTTGRPR. Residues Arg304, 330 to 332, and 412 to 414 each bind GTP; these read KLD and SVG.

It belongs to the adenylosuccinate synthetase family. In terms of assembly, homodimer. Mg(2+) is required as a cofactor.

The protein resides in the cytoplasm. It catalyses the reaction IMP + L-aspartate + GTP = N(6)-(1,2-dicarboxyethyl)-AMP + GDP + phosphate + 2 H(+). Its pathway is purine metabolism; AMP biosynthesis via de novo pathway; AMP from IMP: step 1/2. In terms of biological role, plays an important role in the de novo pathway of purine nucleotide biosynthesis. Catalyzes the first committed step in the biosynthesis of AMP from IMP. The sequence is that of Adenylosuccinate synthetase from Desulforudis audaxviator (strain MP104C).